The following is a 276-amino-acid chain: Large ribosomal subunit protein uL2 (276 aa).

The segment at 213–264 is disordered; sequence WLGRRPHNRGVVMNPVDHPHGGGEGRTSGGRHPVTPWGKPTKGYKTRTNKRT.

The protein belongs to the universal ribosomal protein uL2 family. In terms of assembly, part of the 50S ribosomal subunit. Forms a bridge to the 30S subunit in the 70S ribosome.

One of the primary rRNA binding proteins. Required for association of the 30S and 50S subunits to form the 70S ribosome, for tRNA binding and peptide bond formation. It has been suggested to have peptidyltransferase activity; this is somewhat controversial. Makes several contacts with the 16S rRNA in the 70S ribosome. The chain is Large ribosomal subunit protein uL2 from Granulibacter bethesdensis (strain ATCC BAA-1260 / CGDNIH1).